The primary structure comprises 164 residues: Heat shock protein beta-6 (164 aa).

Positions 1-72 (MEIPVSVQPS…PTAQVSTDPG (72 aa)) are involved in stabilization of the HSPB1:HSBP6 heterodimer. Residue serine 16 is modified to Phosphoserine. The sHSP domain maps to 56 to 163 (RAPSVALPTA…PLQSPPGAAA (108 aa)). Deamidated glutamine is present on glutamine 66. A Phosphoserine modification is found at serine 157.

This sequence belongs to the small heat shock protein (HSP20) family. In terms of assembly, homodimer. Small heat shock proteins form high molecular mass oligomers containing variable number of monomers; these oligomers display a very flexible quaternary structure easily exchanging their subunits. Heterooligomer with HSPB1; formed through oligomerization of HSPB1:HSBP6 dimers; subunit exchange leads to formation of at least two different heterooligomeric complexes, differing in variable quantities of HSPB1 and HSPB6 homodimers in addition to HSPB1:HSPB6 heterodimers. Heterooligomer with CRYAB; large heterooligomers consist of CRYAB homodimers and HSPB5:HSPB6 heterodimers but lacking HSPB6 homodimers. Interacts with BAG3. Interacts (phosphorylated) with YWHAZ. Interacts with PDE4A and PDE4D; required for maintenance of the non-phosphorylated state of HSPB6 under basal conditions. Interacts with KDR. Interacts with PRKD1. Phosphorylated at Ser-16 by PKA and probably PKD1K; required to protect cardiomyocytes from apoptosis.

The protein localises to the cytoplasm. The protein resides in the nucleus. Its subcellular location is the secreted. Its function is as follows. Small heat shock protein which functions as a molecular chaperone probably maintaining denatured proteins in a folding-competent state. Seems to have versatile functions in various biological processes. Plays a role in regulating muscle function such as smooth muscle vasorelaxation and cardiac myocyte contractility. May regulate myocardial angiogenesis implicating KDR. Overexpression mediates cardioprotection and angiogenesis after induced damage. Stabilizes monomeric YWHAZ thereby supporting YWHAZ chaperone-like activity. This chain is Heat shock protein beta-6 (HSPB6), found in Bos taurus (Bovine).